A 183-amino-acid chain; its full sequence is NADH-quinone oxidoreductase subunit I (183 aa).

4Fe-4S ferredoxin-type domains are found at residues 44–74 and 90–119; these read LNRWPDGLEKCIGCELCAWACPADAIYVEAG and RVYQINYLRCILCGLCVEACPTRALTMTNE. The [4Fe-4S] cluster site is built by C54, C57, C60, C64, C99, C102, C105, and C109. The interval 143–183 is disordered; it reads QGMEAPPHPMRLGETEKDYYRLGRDDNAAARADEQNSEAVQ. The segment covering 153-176 has biased composition (basic and acidic residues); sequence RLGETEKDYYRLGRDDNAAARADE.

This sequence belongs to the complex I 23 kDa subunit family. In terms of assembly, NDH-1 is composed of 14 different subunits. Subunits NuoA, H, J, K, L, M, N constitute the membrane sector of the complex. [4Fe-4S] cluster is required as a cofactor.

The protein localises to the cell membrane. The catalysed reaction is a quinone + NADH + 5 H(+)(in) = a quinol + NAD(+) + 4 H(+)(out). In terms of biological role, NDH-1 shuttles electrons from NADH, via FMN and iron-sulfur (Fe-S) centers, to quinones in the respiratory chain. The immediate electron acceptor for the enzyme in this species is believed to be ubiquinone. Couples the redox reaction to proton translocation (for every two electrons transferred, four hydrogen ions are translocated across the cytoplasmic membrane), and thus conserves the redox energy in a proton gradient. In Thermobifida fusca (strain YX), this protein is NADH-quinone oxidoreductase subunit I.